Consider the following 155-residue polypeptide: Small ribosomal subunit protein uS7c (155 aa).

The protein belongs to the universal ribosomal protein uS7 family. Part of the 30S ribosomal subunit.

It is found in the plastid. The protein localises to the chloroplast. Functionally, one of the primary rRNA binding proteins, it binds directly to 16S rRNA where it nucleates assembly of the head domain of the 30S subunit. In Spirogyra maxima (Green alga), this protein is Small ribosomal subunit protein uS7c (rps7).